Reading from the N-terminus, the 588-residue chain is Calicin (588 aa).

The BTB domain maps to 28 to 98; that stretch reads WDMALTVDHH…FYSGKVVISE (71 aa). In terms of domain architecture, BACK spans 133–235; that stretch reads CLRYLFLAEL…NAVSNKTLMF (103 aa). Ser-149 is modified (phosphoserine). 6 Kelch repeats span residues 280-327, 328-375, 377-423, 425-475, 476-525, and 526-580; these read SVVI…AAGR, YIYI…TCGG, VYSV…TKGD, NLYI…SFHQ, DNIL…IGDS, and KVFV…LAKL.

Interacts with CYLC1; the interaction may be relevant for proper acrosome attachment to the nuclear envelope. As to expression, expressed in testis and in spermatozoa.

The protein resides in the cytoplasm. The protein localises to the cytoskeleton. It localises to the perinuclear theca. It is found in the calyx. Functionally, required for both nuclear and acrosomal shaping during spermiogenesis. This chain is Calicin (Ccin), found in Mus musculus (Mouse).